The following is a 470-amino-acid chain: Monocarboxylate transporter 4 (470 aa).

Residues 1–17 (MGGAVVDEGPTGIKAPD) lie on the Cytoplasmic side of the membrane. The helical transmembrane segment at 18–38 (GGWGWAVLFGCFIITGFSYAF) threads the bilayer. Topologically, residues 39–61 (PKAVSVFFKELMHEFGIGYSDTA) are extracellular. A helical membrane pass occupies residues 62-82 (WISSILLAMLYGTGPLCSVCV). The Cytoplasmic portion of the chain corresponds to 83 to 84 (NR). Residues 85–105 (FGCRPVMLVGGLFASLGMVAA) traverse the membrane as a helical segment. Residues 106-109 (SFCR) are Extracellular-facing. A helical transmembrane segment spans residues 110–130 (SIIQIYLTTGVITGLGLALNF). At 131–149 (QPSLIMLNRYFNKRRPIAN) the chain is on the cytoplasmic side. The helical transmembrane segment at 150-170 (GLAAAGSPVFLCALSPLGQLL) threads the bilayer. Residues 171-179 (QDHYGWRGG) lie on the Extracellular side of the membrane. Residues 180 to 200 (FLILGGLLLNCCVCAALMRPL) form a helical membrane-spanning segment. Topologically, residues 201–231 (VAPQVGGGTEPRGPQRPPQRLLDLSVFRDRG) are cytoplasmic. A helical membrane pass occupies residues 232-252 (FLIYAVAASIMVLGLFVPPVF). At 253–267 (VVSYAKDMGVPDTKA) the chain is on the extracellular side. Residues 268–288 (AFLLTILGFIDIFARPTAGFI) traverse the membrane as a helical segment. Residues 289–298 (TGLKKVRPYS) are Cytoplasmic-facing. The helical transmembrane segment at 299–319 (VYLFSFAMFFNGFTDLTGSTA) threads the bilayer. At 320 to 321 (TD) the chain is on the extracellular side. A helical membrane pass occupies residues 322–342 (YGGLVVFCIFFGISYGMVGAL). At 343–355 (QFEVLMAIVGTQK) the chain is on the cytoplasmic side. Residues 356–376 (FSSAIGLVLLLEAVAVLIGPP) form a helical membrane-spanning segment. Over 377–391 (SGGKLLDATKVYKYV) the chain is Extracellular. The chain crosses the membrane as a helical span at residues 392–412 (FILAGAEVLTSSLVLLLGNFF). The Cytoplasmic portion of the chain corresponds to 413–470 (CIGKRKRPEVTEPEEVASEEKLHKPPVDVGVDSREVEHFLKAEPEKNGEVVHTPETSV). Basolateral sorting signal stretches follow at residues 429-446 (ASEE…VDSR) and 446-470 (REVE…ETSV). Residue Ser-430 is modified to Phosphoserine. Thr-465 carries the post-translational modification Phosphothreonine. Ser-469 is modified (phosphoserine).

Belongs to the major facilitator superfamily. Monocarboxylate porter (TC 2.A.1.13) family. In terms of assembly, interacts with BSG; interaction mediates SLC16A3 targeting to the plasma membrane.

The protein resides in the cell membrane. Its subcellular location is the basolateral cell membrane. The enzyme catalyses (S)-lactate(in) + H(+)(in) = (S)-lactate(out) + H(+)(out). The catalysed reaction is pyruvate(out) + H(+)(out) = pyruvate(in) + H(+)(in). Proton-dependent transporter of monocarboxylates such as L-lactate and pyruvate. Plays a predominant role in the L-lactate efflux from highly glycolytic cells. This chain is Monocarboxylate transporter 4 (Slc16a3), found in Mus musculus (Mouse).